The following is a 754-amino-acid chain: Cytosolic neutral trehalase (754 aa).

Over residues 1–10 (MDGKVNNNPP) the composition is skewed to polar residues. Disordered regions lie at residues 1 to 47 (MDGK…LSKN) and 54 to 73 (TFSV…YTSP). Residues aspartate 117, aspartate 119, asparagine 121, glutamine 123, and aspartate 128 each coordinate Ca(2+). Substrate is bound by residues arginine 305, 312–313 (WD), asparagine 349, 358–360 (RSQ), glutamate 427, arginine 476, and glycine 479. Residues aspartate 481 and glutamate 676 each act as proton donor/acceptor in the active site.

Belongs to the glycosyl hydrolase 37 family. Ca(2+) serves as cofactor.

It localises to the cytoplasm. It carries out the reaction alpha,alpha-trehalose + H2O = alpha-D-glucose + beta-D-glucose. It participates in carbohydrate degradation. Functionally, hydrolyzes intracellular trehalose to glucose. The disaccharide trehalose serves as a storage molecule for energy and carbohydrates that is mobilized during nutrient stress. This is Cytosolic neutral trehalase from Kluyveromyces lactis (strain ATCC 8585 / CBS 2359 / DSM 70799 / NBRC 1267 / NRRL Y-1140 / WM37) (Yeast).